A 173-amino-acid chain; its full sequence is MARVEL domain-containing protein 1 (173 aa).

An N-acetylmethionine modification is found at M1. Over 1–29 the chain is Cytoplasmic; it reads MLPPPPRQPPPQARAARGAVRLQRPFLRS. Residues 26 to 166 enclose the MARVEL domain; that stretch reads FLRSPLGVLR…SALYGCGRRC (141 aa). A helical transmembrane segment spans residues 30 to 50; the sequence is PLGVLRLLQLLAGAAFWITIA. Residues 51–59 are Extracellular-facing; that stretch reads TSKYQGPVH. A helical transmembrane segment spans residues 60-80; sequence FALFVSVLFWLLTLGLYFLTL. The Cytoplasmic portion of the chain corresponds to 81–94; sequence LGKHELVPVLGSRW. Residues 95 to 115 traverse the membrane as a helical segment; that stretch reads LMVNVAHDVLAAALYGAATGI. Over 116–138 the chain is Extracellular; that stretch reads MSDQMQRHSYCNLKDYPLPCAYH. Residues 139–159 form a helical membrane-spanning segment; the sequence is AFLAAAVCGGVCHGLYLLSAL. The Cytoplasmic portion of the chain corresponds to 160-173; sequence YGCGRRCQGKQEVA.

As to expression, widely expressed in normal tissues. Down-regulated in multiple primary tumors.

It localises to the cell membrane. It is found in the cytoplasm. Its subcellular location is the cytoskeleton. The protein resides in the nucleus. Its function is as follows. Microtubule-associated protein that exhibits cell cycle-dependent localization and can inhibit cell proliferation and migration. The protein is MARVEL domain-containing protein 1 (MARVELD1) of Homo sapiens (Human).